The following is a 324-amino-acid chain: Phosphate transport system permease protein PstC 2 (324 aa).

The next 6 membrane-spanning stretches (helical) occupy residues 30–50 (ASAA…FLLV), 90–110 (LSSI…AVFL), 125–145 (MVDL…IFVL), 174–194 (AGGG…LPIV), 237–257 (VAAS…VLVI), and 290–310 (PLPT…TFLV). An ABC transmembrane type-1 domain is found at 85-314 (FMVTALSSIT…VLTFLVNAAA (230 aa)).

This sequence belongs to the binding-protein-dependent transport system permease family. CysTW subfamily.

It localises to the cell membrane. Functionally, part of the binding-protein-dependent transport system for phosphate; probably responsible for the translocation of the substrate across the membrane. This chain is Phosphate transport system permease protein PstC 2 (pstC2), found in Mycobacterium bovis (strain ATCC BAA-935 / AF2122/97).